The following is a 485-amino-acid chain: Adenosylhomocysteinase (485 aa).

Positions 64, 139, and 205 each coordinate substrate. Position 206–208 (206–208 (TTT)) interacts with NAD(+). Residues lysine 235 and aspartate 239 each coordinate substrate. Residues asparagine 240, 269–274 (GYGDVG), glutamate 292, asparagine 327, 348–350 (IGH), and asparagine 397 each bind NAD(+).

It belongs to the adenosylhomocysteinase family. Homotetramer. NAD(+) is required as a cofactor.

It catalyses the reaction S-adenosyl-L-homocysteine + H2O = L-homocysteine + adenosine. It participates in amino-acid biosynthesis; L-homocysteine biosynthesis; L-homocysteine from S-adenosyl-L-homocysteine: step 1/1. Adenosylhomocysteine is a competitive inhibitor of S-adenosyl-L-methionine-dependent methyl transferase reactions; therefore adenosylhomocysteinase may play a key role in the control of methylations via regulation of the intracellular concentration of adenosylhomocysteine. The sequence is that of Adenosylhomocysteinase (SAHH) from Triticum aestivum (Wheat).